A 440-amino-acid chain; its full sequence is Adenylosuccinate lyase (440 aa).

Residues 4 to 5 (RY), 67 to 69 (KHD), and 93 to 94 (TS) each bind N(6)-(1,2-dicarboxyethyl)-AMP. The active-site Proton donor/acceptor is the H141. A N(6)-(1,2-dicarboxyethyl)-AMP-binding site is contributed by Q212. S262 acts as the Proton donor/acceptor in catalysis. Residues S263, 268–270 (KRN), N276, and 307–311 (SVERF) each bind N(6)-(1,2-dicarboxyethyl)-AMP.

This sequence belongs to the lyase 1 family. Adenylosuccinate lyase subfamily. In terms of assembly, homotetramer. Residues from neighboring subunits contribute catalytic and substrate-binding residues to each active site.

The enzyme catalyses N(6)-(1,2-dicarboxyethyl)-AMP = fumarate + AMP. The catalysed reaction is (2S)-2-[5-amino-1-(5-phospho-beta-D-ribosyl)imidazole-4-carboxamido]succinate = 5-amino-1-(5-phospho-beta-D-ribosyl)imidazole-4-carboxamide + fumarate. Its pathway is purine metabolism; AMP biosynthesis via de novo pathway; AMP from IMP: step 2/2. It participates in purine metabolism; IMP biosynthesis via de novo pathway; 5-amino-1-(5-phospho-D-ribosyl)imidazole-4-carboxamide from 5-amino-1-(5-phospho-D-ribosyl)imidazole-4-carboxylate: step 2/2. In terms of biological role, catalyzes two reactions in de novo purine nucleotide biosynthesis. Catalyzes the breakdown of 5-aminoimidazole- (N-succinylocarboxamide) ribotide (SAICAR or 2-[5-amino-1-(5-phospho-beta-D-ribosyl)imidazole-4-carboxamido]succinate) to 5-aminoimidazole-4-carboxamide ribotide (AICAR or 5-amino-1-(5-phospho-beta-D-ribosyl)imidazole-4-carboxamide) and fumarate, and of adenylosuccinate (ADS or N(6)-(1,2-dicarboxyethyl)-AMP) to adenosine monophosphate (AMP) and fumarate. The protein is Adenylosuccinate lyase (purB) of Helicobacter pylori (strain ATCC 700392 / 26695) (Campylobacter pylori).